The primary structure comprises 483 residues: Glutamyl-tRNA(Gln) amidotransferase subunit A (483 aa).

Catalysis depends on charge relay system residues K75 and S150. Residue S174 is the Acyl-ester intermediate of the active site.

This sequence belongs to the amidase family. GatA subfamily. As to quaternary structure, heterotrimer of A, B and C subunits.

It catalyses the reaction L-glutamyl-tRNA(Gln) + L-glutamine + ATP + H2O = L-glutaminyl-tRNA(Gln) + L-glutamate + ADP + phosphate + H(+). Its function is as follows. Allows the formation of correctly charged Gln-tRNA(Gln) through the transamidation of misacylated Glu-tRNA(Gln) in organisms which lack glutaminyl-tRNA synthetase. The reaction takes place in the presence of glutamine and ATP through an activated gamma-phospho-Glu-tRNA(Gln). The polypeptide is Glutamyl-tRNA(Gln) amidotransferase subunit A (Legionella pneumophila (strain Corby)).